The sequence spans 502 residues: Membrane protein insertase YidC (502 aa).

Helical transmembrane passes span 12–32 (FLIF…FYIY), 286–306 (LDWG…YWIY), 312–332 (WVLS…PLGY), 382–402 (LPIL…IITV), 409–429 (FLWI…VIMG), and 452–472 (ITSV…VLYW).

The protein belongs to the OXA1/ALB3/YidC family. Type 1 subfamily. In terms of assembly, interacts with the Sec translocase complex via SecD. Specifically interacts with transmembrane segments of nascent integral membrane proteins during membrane integration.

Its subcellular location is the cell membrane. Its function is as follows. Required for the insertion and/or proper folding and/or complex formation of integral membrane proteins into the membrane. Involved in integration of membrane proteins that insert both dependently and independently of the Sec translocase complex, as well as at least some lipoproteins. Aids folding of multispanning membrane proteins. This Aquifex aeolicus (strain VF5) protein is Membrane protein insertase YidC.